A 158-amino-acid polypeptide reads, in one-letter code: Transcription elongation factor GreA (158 aa).

A coiled-coil region spans residues 10–76; that stretch reads TLEGKKKLEE…QIEKMIRNAE (67 aa).

The protein belongs to the GreA/GreB family.

Functionally, necessary for efficient RNA polymerase transcription elongation past template-encoded arresting sites. The arresting sites in DNA have the property of trapping a certain fraction of elongating RNA polymerases that pass through, resulting in locked ternary complexes. Cleavage of the nascent transcript by cleavage factors such as GreA or GreB allows the resumption of elongation from the new 3'terminus. GreA releases sequences of 2 to 3 nucleotides. The sequence is that of Transcription elongation factor GreA from Halalkalibacterium halodurans (strain ATCC BAA-125 / DSM 18197 / FERM 7344 / JCM 9153 / C-125) (Bacillus halodurans).